A 379-amino-acid polypeptide reads, in one-letter code: Chaperone protein DnaJ (379 aa).

Residues 5–70 form the J domain; sequence DYYETLEVSQ…QKRAAYDQYG (66 aa). Residues 135–213 form a CR-type zinc finger; it reads GKSLEIKVPT…CRGQGRVEKT (79 aa). C148, C151, C165, C168, C187, C190, C201, and C204 together coordinate Zn(2+). 4 CXXCXGXG motif repeats span residues 148–155, 165–172, 187–194, and 201–208; these read CEPCDGSG, CSTCHGHG, CPTCSGKG, and CTSCRGQG.

The protein belongs to the DnaJ family. Homodimer. It depends on Zn(2+) as a cofactor.

The protein resides in the cytoplasm. Participates actively in the response to hyperosmotic and heat shock by preventing the aggregation of stress-denatured proteins and by disaggregating proteins, also in an autonomous, DnaK-independent fashion. Unfolded proteins bind initially to DnaJ; upon interaction with the DnaJ-bound protein, DnaK hydrolyzes its bound ATP, resulting in the formation of a stable complex. GrpE releases ADP from DnaK; ATP binding to DnaK triggers the release of the substrate protein, thus completing the reaction cycle. Several rounds of ATP-dependent interactions between DnaJ, DnaK and GrpE are required for fully efficient folding. Also involved, together with DnaK and GrpE, in the DNA replication of plasmids through activation of initiation proteins. The protein is Chaperone protein DnaJ of Colwellia maris.